The sequence spans 486 residues: Glutamyl-tRNA(Gln) amidotransferase subunit A (486 aa).

Residues lysine 77 and serine 152 each act as charge relay system in the active site. The Acyl-ester intermediate role is filled by serine 176.

Belongs to the amidase family. GatA subfamily. In terms of assembly, heterotrimer of A, B and C subunits.

It catalyses the reaction L-glutamyl-tRNA(Gln) + L-glutamine + ATP + H2O = L-glutaminyl-tRNA(Gln) + L-glutamate + ADP + phosphate + H(+). Functionally, allows the formation of correctly charged Gln-tRNA(Gln) through the transamidation of misacylated Glu-tRNA(Gln) in organisms which lack glutaminyl-tRNA synthetase. The reaction takes place in the presence of glutamine and ATP through an activated gamma-phospho-Glu-tRNA(Gln). The sequence is that of Glutamyl-tRNA(Gln) amidotransferase subunit A from Lactococcus lactis subsp. cremoris (strain SK11).